The sequence spans 519 residues: Ribonuclease Y 1 (519 aa).

The chain crosses the membrane as a helical span at residues I2–F22. A disordered region spans residues Q84–R113. Residues T209 to M294 form the KH domain. The 94-residue stretch at V335–A428 folds into the HD domain.

It belongs to the RNase Y family.

The protein localises to the cell membrane. Its function is as follows. Endoribonuclease that initiates mRNA decay. In Pediococcus pentosaceus (strain ATCC 25745 / CCUG 21536 / LMG 10740 / 183-1w), this protein is Ribonuclease Y 1.